The following is a 105-amino-acid chain: Anti-sigma factor RsrA (105 aa).

The Zn(2+) site is built by Cys11, His37, Cys41, and Cys44. Cys11 and Cys44 are disulfide-bonded. The tract at residues 33-47 is contributes to redox-sensitivity; that stretch reads KFEHHFEECSPCLEK. Residues 86–105 form a disordered region; that stretch reads QSVPEHDVAAAPSSSAPQES. A compositionally biased stretch (low complexity) spans 94–105; sequence AAAPSSSAPQES.

The protein belongs to the zinc-associated anti-sigma factor (ZAS) superfamily. As to quaternary structure, interacts with cognate sigma factor SigR under reducing but not oxiding conditions. Treatment with the thiol-oxidzing agent diamide inhibits the interaction, while incubation with thioredoxin (trxA) stimulates the interaction. Zn(2+) serves as cofactor. In terms of processing, under oxidizing conditions up to 3 disulfide bonds are formed. A single disulfide bond inhibits binding to SigR. Cys-11 forms a disulfide bond with either Cys-44 (the major bind) or Cys-41 (a minor bond).

Functionally, a redox-regulated anti-sigma factor for extracytoplasmic function (ECF) sigma factor SigR, and a key sensor of disulfide stress. Holds SigR, its cognate ECF sigma factor, in an inactive form, inhibiting its sigma activity under reducing but not oxidizing conditions; oxidation and reduction of the anti-sigma factor is reversible. Mycothiol (MSH) is competent for reduction of RsrA, allowing it to bind to SigR. In conjunction with its cognate sigma factor SigR may sense the intracellular level of reduced MSH. Probably releases SigR during oxidative stress. This chain is Anti-sigma factor RsrA (rsrA), found in Streptomyces coelicolor (strain ATCC BAA-471 / A3(2) / M145).